Here is an 86-residue protein sequence, read N- to C-terminus: Large ribosomal subunit protein bL35m (86 aa).

The transit peptide at M1–K18 directs the protein to the mitochondrion. The segment at R45 to E69 is disordered.

Belongs to the bacterial ribosomal protein bL35 family. In terms of assembly, component of the mitochondrial large ribosomal subunit (mt-LSU). Mature yeast 74S mitochondrial ribosomes consist of a small (37S) and a large (54S) subunit. The 37S small subunit contains a 15S ribosomal RNA (15S mt-rRNA) and at least 32 different proteins. The 54S large subunit contains a 21S rRNA (21S mt-rRNA) and at least 45 different proteins.

Its subcellular location is the mitochondrion. Functionally, component of the mitochondrial ribosome (mitoribosome), a dedicated translation machinery responsible for the synthesis of mitochondrial genome-encoded proteins, including at least some of the essential transmembrane subunits of the mitochondrial respiratory chain. The mitoribosomes are attached to the mitochondrial inner membrane and translation products are cotranslationally integrated into the membrane. The polypeptide is Large ribosomal subunit protein bL35m (new15) (Schizosaccharomyces pombe (strain 972 / ATCC 24843) (Fission yeast)).